Consider the following 100-residue polypeptide: Urease subunit gamma (100 aa).

It belongs to the urease gamma subunit family. As to quaternary structure, heterotrimer of UreA (gamma), UreB (beta) and UreC (alpha) subunits. Three heterotrimers associate to form the active enzyme.

The protein resides in the cytoplasm. It catalyses the reaction urea + 2 H2O + H(+) = hydrogencarbonate + 2 NH4(+). The protein operates within nitrogen metabolism; urea degradation; CO(2) and NH(3) from urea (urease route): step 1/1. In Chelativorans sp. (strain BNC1), this protein is Urease subunit gamma.